A 233-amino-acid chain; its full sequence is 7-cyano-7-deazaguanine synthase (233 aa).

7 to 17 (LSGGLDSLVTS) provides a ligand contact to ATP. 4 residues coordinate Zn(2+): Cys-195, Cys-206, Cys-209, and Cys-212.

It belongs to the QueC family. Zn(2+) serves as cofactor.

The catalysed reaction is 7-carboxy-7-deazaguanine + NH4(+) + ATP = 7-cyano-7-deazaguanine + ADP + phosphate + H2O + H(+). It participates in purine metabolism; 7-cyano-7-deazaguanine biosynthesis. Its function is as follows. Catalyzes the ATP-dependent conversion of 7-carboxy-7-deazaguanine (CDG) to 7-cyano-7-deazaguanine (preQ(0)). This Methanococcus vannielii (strain ATCC 35089 / DSM 1224 / JCM 13029 / OCM 148 / SB) protein is 7-cyano-7-deazaguanine synthase.